The following is a 555-amino-acid chain: CTP synthase (555 aa).

Residues 1–265 (MTRYIFITGG…GNRVCEKLNI (265 aa)) form an amidoligase domain region. Position 13 (S13) interacts with CTP. Residue S13 participates in UTP binding. Residues 14-19 (SLGKGI) and D71 contribute to the ATP site. Mg(2+) is bound by residues D71 and E139. Residues 146–148 (DIE), 186–191 (KTKPTQ), and K222 contribute to the CTP site. UTP contacts are provided by residues 186-191 (KTKPTQ) and K222. The Glutamine amidotransferase type-1 domain maps to 290-541 (TVAVVGKYVD…IKAGLAAKEA (252 aa)). Residue G351 participates in L-glutamine binding. C378 (nucleophile; for glutamine hydrolysis) is an active-site residue. L-glutamine is bound by residues 379–382 (LGMQ), E402, and R469. Catalysis depends on residues H514 and E516.

This sequence belongs to the CTP synthase family. Homotetramer.

The enzyme catalyses UTP + L-glutamine + ATP + H2O = CTP + L-glutamate + ADP + phosphate + 2 H(+). It carries out the reaction L-glutamine + H2O = L-glutamate + NH4(+). It catalyses the reaction UTP + NH4(+) + ATP = CTP + ADP + phosphate + 2 H(+). Its pathway is pyrimidine metabolism; CTP biosynthesis via de novo pathway; CTP from UDP: step 2/2. With respect to regulation, allosterically activated by GTP, when glutamine is the substrate; GTP has no effect on the reaction when ammonia is the substrate. The allosteric effector GTP functions by stabilizing the protein conformation that binds the tetrahedral intermediate(s) formed during glutamine hydrolysis. Inhibited by the product CTP, via allosteric rather than competitive inhibition. Catalyzes the ATP-dependent amination of UTP to CTP with either L-glutamine or ammonia as the source of nitrogen. Regulates intracellular CTP levels through interactions with the four ribonucleotide triphosphates. The sequence is that of CTP synthase from Coxiella burnetii (strain CbuK_Q154) (Coxiella burnetii (strain Q154)).